The following is a 507-amino-acid chain: AMSH-like ubiquitin thioesterase 3 (507 aa).

A coiled-coil region spans residues 73-107; the sequence is QERLGSRKRLRAVINELESLKPEFNQLVDKLNRVE. Disordered regions lie at residues 133-162 and 214-242; these read HKAS…LTSS and PSNT…LNGD. Polar residues-rich tracts occupy residues 146–162, 214–224, and 232–242; these read LPTS…LTSS, PSNTDWGSADN, and PSSSSASLNGD. The MPN domain occupies 333-463; it reads LHVPVRIMDD…IFHLSDPSGV (131 aa). Histidine 411, histidine 413, aspartate 424, histidine 426, cysteine 469, histidine 475, and histidine 477 together coordinate Zn(2+). The JAMM motif signature appears at 411–424; it reads HTHPTQTCFMSSVD.

It belongs to the peptidase M67C family. Interacts with PATL1 and PATL2. May also bind to HSC70-1, HSC70-3, VHA-A, BGLU23 and EPSIN1. Interacts with BRO1/ALIX. The cofactor is Zn(2+).

It localises to the membrane. The protein localises to the cytoplasm. Its subcellular location is the vacuole membrane. The protein resides in the late endosome. In terms of biological role, zinc metalloprotease that cleaves 'Lys-48'- and 'Lys-63'-linked polyubiquitin chains, but is not implicated in protein degradation by the 26S proteasome, deneddylation, or desumoylation. Required for intracellular trafficking (e.g. trafficking from the Golgi to the vacuole and the vacuolar trafficking of endocytosed cargo), endocytosis and vacuole biogenesis. The protein is AMSH-like ubiquitin thioesterase 3 (AMSH3) of Arabidopsis thaliana (Mouse-ear cress).